The chain runs to 534 residues: Protein FAM83D (534 aa).

2 disordered regions span residues 320-372 (TPPS…STLG) and 501-534 (GLNR…RGLQ). Over residues 329-342 (TKPQAERLTSTPAR) the composition is skewed to polar residues. Basic and acidic residues predominate over residues 350-362 (RMNKDIEEPDRKS). Over residues 511–520 (EARQPNTNID) the composition is skewed to polar residues.

Belongs to the FAM83 family.

Its subcellular location is the cytoplasm. The protein resides in the cytoskeleton. The protein localises to the spindle. It localises to the spindle pole. In terms of biological role, may regulate cell proliferation, growth, migration and epithelial to mesenchymal transition. May also be important for proper chromosome congression and alignment during mitosis. The protein is Protein FAM83D of Danio rerio (Zebrafish).